The following is a 310-amino-acid chain: Probable GTP 3',8-cyclase (310 aa).

The 214-residue stretch at 5 to 218 (KYGRSLQKLR…VNIIFELGGR (214 aa)) folds into the Radical SAM core domain. Arginine 14 lines the GTP pocket. Residues cysteine 21, cysteine 25, and cysteine 28 each coordinate [4Fe-4S] cluster. Residue lysine 62 participates in GTP binding. Residue glycine 66 coordinates S-adenosyl-L-methionine. GTP is bound at residue threonine 91. Serine 115 lines the S-adenosyl-L-methionine pocket. Residue lysine 153 participates in GTP binding. The [4Fe-4S] cluster site is built by cysteine 251, cysteine 254, and cysteine 268.

This sequence belongs to the radical SAM superfamily. MoaA family. Requires [4Fe-4S] cluster as cofactor.

It catalyses the reaction GTP + AH2 + S-adenosyl-L-methionine = (8S)-3',8-cyclo-7,8-dihydroguanosine 5'-triphosphate + 5'-deoxyadenosine + L-methionine + A + H(+). It participates in cofactor biosynthesis; molybdopterin biosynthesis. Its function is as follows. Catalyzes the cyclization of GTP to (8S)-3',8-cyclo-7,8-dihydroguanosine 5'-triphosphate. This is Probable GTP 3',8-cyclase from Pyrobaculum aerophilum (strain ATCC 51768 / DSM 7523 / JCM 9630 / CIP 104966 / NBRC 100827 / IM2).